A 413-amino-acid chain; its full sequence is Tryptophan synthase beta chain (413 aa).

Lys-107 is subject to N6-(pyridoxal phosphate)lysine.

This sequence belongs to the TrpB family. As to quaternary structure, tetramer of two alpha and two beta chains. Pyridoxal 5'-phosphate is required as a cofactor.

The catalysed reaction is (1S,2R)-1-C-(indol-3-yl)glycerol 3-phosphate + L-serine = D-glyceraldehyde 3-phosphate + L-tryptophan + H2O. Its pathway is amino-acid biosynthesis; L-tryptophan biosynthesis; L-tryptophan from chorismate: step 5/5. Its function is as follows. The beta subunit is responsible for the synthesis of L-tryptophan from indole and L-serine. This Trichormus variabilis (strain ATCC 29413 / PCC 7937) (Anabaena variabilis) protein is Tryptophan synthase beta chain.